The sequence spans 217 residues: Probable chemoreceptor glutamine deamidase CheD (217 aa).

Residues alanine 194–serine 217 are disordered.

The protein belongs to the CheD family.

The catalysed reaction is L-glutaminyl-[protein] + H2O = L-glutamyl-[protein] + NH4(+). Its function is as follows. Probably deamidates glutamine residues to glutamate on methyl-accepting chemotaxis receptors (MCPs), playing an important role in chemotaxis. The polypeptide is Probable chemoreceptor glutamine deamidase CheD (Cupriavidus pinatubonensis (strain JMP 134 / LMG 1197) (Cupriavidus necator (strain JMP 134))).